The sequence spans 440 residues: Amino acid transporter AVT6D (440 aa).

Transmembrane regions (helical) follow at residues 26–46 (FAGA…MAIP), 47–67 (AAFK…IAWL), 102–122 (AVTV…SIII), 149–169 (WNTR…PLVL), 182–202 (ISFL…IIAL), 219–239 (GGLS…AFTF), 262–282 (ISVI…YLLF), 309–329 (IVRL…NFSL), 356–376 (FPLL…WYFF), 377–397 (QFLG…AIVL), and 410–430 (IVAS…ISTN).

It belongs to the amino acid/polyamine transporter 2 family. Amino acid/auxin permease (AAAP) (TC 2.A.18.6) subfamily.

The protein resides in the membrane. This is Amino acid transporter AVT6D from Arabidopsis thaliana (Mouse-ear cress).